The following is a 1299-amino-acid chain: Sophorolipid transporter (1299 aa).

At 1 to 64 (MVDDIQVEKR…FCTPLDVFLE (64 aa)) the chain is on the cytoplasmic side. The chain crosses the membrane as a helical span at residues 65–85 (ILALFFAAVHGAALPMFTLVV). The 292-residue stretch at 65-356 (ILALFFAAVH…IAPNVRFLVK (292 aa)) folds into the ABC transmembrane type-1 1 domain. At 86 to 114 (GAIFNTFRDFTSYDLKGNEFQHKVNHLSL) the chain is on the extracellular side. The chain crosses the membrane as a helical span at residues 115–135 (YFVYIGIGMLGSAFLESFLLV). Residues 136-187 (DRGEVLAGRYRKHYLSAVIRQNIAFYDKLGGGEVSTRIINDTNSIQEAISDK) are Cytoplasmic-facing. Residues 188–208 (LGNVVQGIASFIAATVISFAS) traverse the membrane as a helical segment. The Extracellular portion of the chain corresponds to 209–214 (QWKLAC). The helical transmembrane segment at 215–235 (ILLSAVGFMVITMGTGATFMA) threads the bilayer. The Cytoplasmic segment spans residues 236–293 (KYQLRSDAIYSQSGATVAEEALSAVRTTVAFGAQPHLAVKYEKVLDRVVKESKRSSYS). Residues 294 to 314 (LGVMLACIWASTFWVYALALW) form a helical membrane-spanning segment. At 315 to 326 (QGSREIVSGSAD) the chain is on the extracellular side. A helical transmembrane segment spans residues 327–347 (VGKIIVVITAMLLGSFQLGNI). Over 348–725 (APNVRFLVKG…WGLNRKEWGY (378 aa)) the chain is Cytoplasmic. One can recognise an ABC transporter 1 domain in the interval 393-638 (IELKNVKFRY…EGPYKALVDA (246 aa)). 428-435 (GASGSGKS) lines the ATP pocket. Polar residues predominate over residues 681-690 (SAGTQTTQPP). The interval 681 to 703 (SAGTQTTQPPEYQENDIPGVRNP) is disordered. A helical transmembrane segment spans residues 726 to 746 (ILIGSLASIILGYCYPAMAII). The region spanning 727-1016 (LIGSLASIIL…IFSYAPNMNS (290 aa)) is the ABC transmembrane type-1 2 domain. The Extracellular segment spans residues 747-769 (TGQTTGSMVLPPSEYGKMRHVVN). The chain crosses the membrane as a helical span at residues 770 to 790 (IMGWWYFFVGCISFMTAFITI). Over 791–848 (AALSLASDKLVKNIRLALFRQLMRMDIAFFDHKNNTPGALTSILAKEAKMIEGLSGAT) the chain is Cytoplasmic. Residues 849-869 (LGQIQQSLVTLIGGIVTGIPF) form a helical membrane-spanning segment. Residues 870 to 874 (NWRIG) lie on the Extracellular side of the membrane. Residues 875 to 895 (LVATSVVPVMLVCGFVRVWVL) traverse the membrane as a helical segment. Over 896 to 954 (TQLSDRAREVYERSGSMASEYTSAVRTVQSLTRELDVVVKYTKTVDSQIFSSRIAIARS) the chain is Cytoplasmic. A helical membrane pass occupies residues 955-975 (ALYYALSEGMTPWVVALVFWW). Topologically, residues 976–987 (GSTVMRRGEASV) are extracellular. The helical transmembrane segment at 988 to 1008 (AGYMTVFMAIITGSQAAGQIF) threads the bilayer. Residues 1009–1299 (SYAPNMNSAK…LVNLQGLGEI (291 aa)) lie on the Cytoplasmic side of the membrane. Residues 1053-1293 (IEFRHVNFRY…NGWYAELVNL (241 aa)) form the ABC transporter 2 domain. An ATP-binding site is contributed by 1088–1095 (GASGCGKS).

It belongs to the ABC transporter superfamily. ABCB family. Multidrug resistance exporter (TC 3.A.1.201) subfamily.

It is found in the cell membrane. In terms of biological role, transports acidic acylated and non-acylated sophorolipids (SLs) into the extracellular space, where they can be lactonized by lactone esterase. This chain is Sophorolipid transporter (mdr), found in Starmerella bombicola (Yeast).